The chain runs to 164 residues: MGIFKVEKYIGSDTPGLVYQLNNPWLVYSENTNVYKFETIAGFWNLFSTKLTNKRLSVLRDNTMTNDYQSHCYFVVIDLNNNIDSYQVFMKLLLGLIGETLSNGYLINGLTWINDSGNKRIIIWLSNTVNTVDKICFTEEYNDYIFHQNNCHNITYMSLNESKQ.

This is an uncharacterized protein from Acanthamoeba polyphaga mimivirus (APMV).